The chain runs to 1003 residues: NACHT, LRR and PYD domains-containing protein 9B (1003 aa).

The Pyrin domain maps to 1 to 91; it reads MAGSSGYGLL…SIMAQKKKRH (91 aa). In terms of domain architecture, NACHT spans 143–465; sequence VTAIVAGTTG…QDKDICVPVI (323 aa). 149-156 contributes to the ATP binding site; sequence GTTGEGKT. LRR repeat units lie at residues 749–770, 778–799, 806–826, 835–856, 863–883, 892–913, and 920–940; these read KVKH…SLCE, VLQS…HLYE, HLSL…NLLC, TLKE…EISA, NLKT…RQLC, NLEC…DLAL, and TLNS…VVLC.

As to quaternary structure, sensor component of NLRP9 inflammasomes. Inflammasomes are supramolecular complexes that assemble in the cytosol in response to pathogens, such as rotavirus, but not encephalomyocarditis virus (EMCV), and play critical roles in innate immunity and inflammation. The core of NLRP9 inflammasomes consists of a signal sensor component (NLRP9), an adapter (ASC/PYCARD), which recruits an effector pro-inflammatory caspase (CASP1). Within the complex, NLRP9 and PYCARD interact via their respective DAPIN/pyrin domains. This interaction initiates speck formation (nucleation) which greatly enhances further addition of soluble PYCARD molecules to the speck in a prion-like polymerization process. Clustered PYCARD nucleates the formation of CASP1 filaments through the interaction of their respective CARD domains, acting as a platform for CASP1 polymerization. CASP1 filament formation increases local enzyme concentration, resulting in trans-autocleavage and activation. Active CASP1 then processes IL1B and IL18 precursors, leading to the release of mature cytokines in the extracellular milieu and inflammatory response. Interacts with DHX9 upon rotavirus infection; this interaction may trigger inflammasome activation and inflammatory response. As to expression, predominantly expressed in the intestine, including proximal and distal colon, cecum, ileum, jejunum and duodenum (at protein level). In the ileum, expressed in epithelial cells. Also expressed in oocytes at all follicular stages and in preimplantation embryos (at protein level). Although expression decreases in preimplantation embryos, it is still detectable in blastocyts.

The protein localises to the cytoplasm. Its subcellular location is the inflammasome. Its function is as follows. As the sensor component of the NLRP9 inflammasome, plays a crucial role in innate immunity and inflammation. In response to pathogens, including rotavirus, initiates the formation of the inflammasome polymeric complex, made of NLRP9, PYCARD and CASP1. Recruitment of proCASP1 to the inflammasome promotes its activation and CASP1-catalyzed IL1B and IL18 maturation and release in the extracellular milieu. The active cytokines stimulate inflammatory responses. Inflammasomes can also induce pyroptosis, an inflammatory form of programmed cell death. NLRP9 inflammasome activation may be initiated by DHX9 interaction with viral double-stranded RNA (dsRNA), preferentially to short dsRNA segments. The chain is NACHT, LRR and PYD domains-containing protein 9B (Nlrp9b) from Mus musculus (Mouse).